A 259-amino-acid polypeptide reads, in one-letter code: 5'-nucleotidase SurE (259 aa).

Residues Asp-8, Asp-9, Ser-40, and Asn-92 each coordinate a divalent metal cation.

Belongs to the SurE nucleotidase family. A divalent metal cation serves as cofactor.

It is found in the cytoplasm. The catalysed reaction is a ribonucleoside 5'-phosphate + H2O = a ribonucleoside + phosphate. Nucleotidase that shows phosphatase activity on nucleoside 5'-monophosphates. This is 5'-nucleotidase SurE from Xanthomonas oryzae pv. oryzae (strain MAFF 311018).